A 1418-amino-acid polypeptide reads, in one-letter code: Transcriptional regulator ADR1 (1418 aa).

Composition is skewed to low complexity over residues 34–44 and 68–93; these read TTTTANMSNTT and TSMS…TTTS. Residues 34-96 are disordered; it reads TTTTANMSNT…AATTTTSKKS (63 aa). C2H2-type zinc fingers lie at residues 117 to 139 and 145 to 168; these read FVCQ…ERSH and FSCG…QKLH. Disordered stretches follow at residues 181–285, 403–426, 454–484, 1132–1167, and 1338–1362; these read KSIK…LDQR, SQHG…RSES, VAAH…GLSR, NSNS…NNSN, and TNTN…NQHH. Over residues 189-211 the composition is skewed to acidic residues; sequence GDDDDDDDDDDEEMANSEDENDH. Over residues 236–278 the composition is skewed to polar residues; sequence NLFNSKQKPTKANTTKSKVAKLSTTTSRKNSTNPTRKNSSSLH. 3 stretches are compositionally biased toward low complexity: residues 462–477, 1145–1167, and 1338–1356; these read QQQQ…QPNQ, NEIN…NNSN, and TNTN…DNGT.

Its subcellular location is the nucleus. Its function is as follows. Transcription factor involved in the regulation of hyphal growth. This is Transcriptional regulator ADR1 (ADR1) from Candida albicans (strain SC5314 / ATCC MYA-2876) (Yeast).